The primary structure comprises 302 residues: MMDVDRSIRLVIVTGMSGAGKTQALKYLEDLGFFCVDNLPPSLMPKLAELFGQTEGKVSRLALGIDIRGGRFFHEILGALRQIAEIGVAYQILFMDASDEVLVRRYKETRRRHPLAAQGRVLDGIQRERRLLQELRGLATFIIDTTHMTPADLRKELNRRFGQDRESPHFHVNVVSFGFKHGAVLDADLVFDVRFLPNPHYVPDLQPLTGEDPAVVEYVMKWNVTQQFYRRLTGLIGFLLPHYVAEGKSLLTIAIGCTGGKHRSVCLANRLAHWIRERGYSVSVEHRDMPRPADRSDEEEQP.

15–22 (GMSGAGKT) serves as a coordination point for ATP. 66-69 (DIRG) lines the GTP pocket.

It belongs to the RapZ-like family.

Functionally, displays ATPase and GTPase activities. The chain is Nucleotide-binding protein STH186 from Symbiobacterium thermophilum (strain DSM 24528 / JCM 14929 / IAM 14863 / T).